The sequence spans 469 residues: 3-isopropylmalate dehydratase large subunit (469 aa).

[4Fe-4S] cluster contacts are provided by cysteine 347, cysteine 408, and cysteine 411.

Belongs to the aconitase/IPM isomerase family. LeuC type 1 subfamily. As to quaternary structure, heterodimer of LeuC and LeuD. [4Fe-4S] cluster serves as cofactor.

It catalyses the reaction (2R,3S)-3-isopropylmalate = (2S)-2-isopropylmalate. It participates in amino-acid biosynthesis; L-leucine biosynthesis; L-leucine from 3-methyl-2-oxobutanoate: step 2/4. Catalyzes the isomerization between 2-isopropylmalate and 3-isopropylmalate, via the formation of 2-isopropylmaleate. This chain is 3-isopropylmalate dehydratase large subunit, found in Haemophilus influenzae (strain PittEE).